A 318-amino-acid polypeptide reads, in one-letter code: MNYQVLLYYKYTTIDDPEQFAQDHLAFCKAHHLKGRILVSTEGINGTLSGTKEETEQYMAHMHADERFKDMVFKIDEAEGHAFKKMHVRPRKEIVALDLEDDVDPRHTTGQYLSPVEFRKALEDDDTVIIDARNDYEFDLGHFRGAIRPNITRFRDLPDWIKENKALFADKKVVTYCTGGIRCEKFSGWLLKEGFEDVAQLHGGIATYGKDPETKGEYWDGKMYVFDDRISVNINQVEKTIIGKDWFDGKPCERYINCANPECNKQILVSEENETKYLGACSYECAKHERNRYVQANNISDNEWQQRLTNFDDLHQHA.

In terms of domain architecture, Rhodanese spans 123-217 (EDDDTVIIDA…YGKDPETKGE (95 aa)). C177 functions as the Cysteine persulfide intermediate in the catalytic mechanism.

It belongs to the TrhO family.

The catalysed reaction is uridine(34) in tRNA + AH2 + O2 = 5-hydroxyuridine(34) in tRNA + A + H2O. Its function is as follows. Catalyzes oxygen-dependent 5-hydroxyuridine (ho5U) modification at position 34 in tRNAs. This is tRNA uridine(34) hydroxylase from Staphylococcus aureus (strain MSSA476).